Reading from the N-terminus, the 242-residue chain is Probable 2-phosphosulfolactate phosphatase (242 aa).

This sequence belongs to the ComB family. Requires Mg(2+) as cofactor.

It catalyses the reaction (2R)-O-phospho-3-sulfolactate + H2O = (2R)-3-sulfolactate + phosphate. The polypeptide is Probable 2-phosphosulfolactate phosphatase (Caldicellulosiruptor saccharolyticus (strain ATCC 43494 / DSM 8903 / Tp8T 6331)).